A 116-amino-acid polypeptide reads, in one-letter code: Large ribosomal subunit protein bL20 (116 aa).

Belongs to the bacterial ribosomal protein bL20 family.

In terms of biological role, binds directly to 23S ribosomal RNA and is necessary for the in vitro assembly process of the 50S ribosomal subunit. It is not involved in the protein synthesizing functions of that subunit. This chain is Large ribosomal subunit protein bL20, found in Desulforapulum autotrophicum (strain ATCC 43914 / DSM 3382 / VKM B-1955 / HRM2) (Desulfobacterium autotrophicum).